A 210-amino-acid polypeptide reads, in one-letter code: Leucyl/phenylalanyl-tRNA--protein transferase (210 aa).

The protein belongs to the L/F-transferase family.

It localises to the cytoplasm. The catalysed reaction is N-terminal L-lysyl-[protein] + L-leucyl-tRNA(Leu) = N-terminal L-leucyl-L-lysyl-[protein] + tRNA(Leu) + H(+). It catalyses the reaction N-terminal L-arginyl-[protein] + L-leucyl-tRNA(Leu) = N-terminal L-leucyl-L-arginyl-[protein] + tRNA(Leu) + H(+). It carries out the reaction L-phenylalanyl-tRNA(Phe) + an N-terminal L-alpha-aminoacyl-[protein] = an N-terminal L-phenylalanyl-L-alpha-aminoacyl-[protein] + tRNA(Phe). Its function is as follows. Functions in the N-end rule pathway of protein degradation where it conjugates Leu, Phe and, less efficiently, Met from aminoacyl-tRNAs to the N-termini of proteins containing an N-terminal arginine or lysine. This chain is Leucyl/phenylalanyl-tRNA--protein transferase, found in Deinococcus radiodurans (strain ATCC 13939 / DSM 20539 / JCM 16871 / CCUG 27074 / LMG 4051 / NBRC 15346 / NCIMB 9279 / VKM B-1422 / R1).